Here is a 427-residue protein sequence, read N- to C-terminus: BRO1 domain-containing protein BROX homolog (427 aa).

In terms of domain architecture, BRO1 spans 1–427 (MSHWFHRNPI…PSNSSGCVIA (427 aa)).

It belongs to the BROX family.

This is BRO1 domain-containing protein BROX homolog from Caenorhabditis elegans.